We begin with the raw amino-acid sequence, 493 residues long: Lysine--tRNA ligase (493 aa).

Residues glutamate 402 and glutamate 409 each contribute to the Mg(2+) site.

This sequence belongs to the class-II aminoacyl-tRNA synthetase family. As to quaternary structure, homodimer. Requires Mg(2+) as cofactor.

It is found in the cytoplasm. The enzyme catalyses tRNA(Lys) + L-lysine + ATP = L-lysyl-tRNA(Lys) + AMP + diphosphate. The sequence is that of Lysine--tRNA ligase from Ureaplasma parvum serovar 3 (strain ATCC 27815 / 27 / NCTC 11736).